Reading from the N-terminus, the 383-residue chain is Glutamate 5-kinase (383 aa).

Residue lysine 17 coordinates ATP. Substrate is bound by residues serine 64, aspartate 151, and asparagine 165. Serine 185–aspartate 186 lines the ATP pocket. The 77-residue stretch at serine 291–asparagine 367 folds into the PUA domain.

Belongs to the glutamate 5-kinase family.

Its subcellular location is the cytoplasm. The catalysed reaction is L-glutamate + ATP = L-glutamyl 5-phosphate + ADP. It functions in the pathway amino-acid biosynthesis; L-proline biosynthesis; L-glutamate 5-semialdehyde from L-glutamate: step 1/2. Functionally, catalyzes the transfer of a phosphate group to glutamate to form L-glutamate 5-phosphate. The sequence is that of Glutamate 5-kinase from Methanosarcina barkeri (strain Fusaro / DSM 804).